We begin with the raw amino-acid sequence, 238 residues long: DNA damage-regulated autophagy modulator protein 1 (238 aa).

6 helical membrane-spanning segments follow: residues 9–29, 53–73, 91–111, 116–136, 161–181, and 200–220; these read AFVPFLLVTWSSAAFIISYVV, SGIFGFMINFSAFLGAATMYT, VFNLVSLVLGLVGCFGMGIVA, LAVPVVHDGGALLAFVCGVVY, MVISAVSCAAVIPMIVCASLI, and VSAICEWTVAFGFIFYFLTFI.

This sequence belongs to the DRAM/TMEM150 family.

Its subcellular location is the lysosome membrane. Its function is as follows. Lysosomal modulator of autophagy that plays a central role in p53/TP53-mediated apoptosis. Not involved in p73/TP73-mediated autophagy. The protein is DNA damage-regulated autophagy modulator protein 1 (DRAM1) of Homo sapiens (Human).